A 123-amino-acid polypeptide reads, in one-letter code: MKHRIGRVEGEILRELTKILRKDIRDPRLNDVTITAVECTNDLSYATVYYSMLTDDPAKEKEVAEGLDKAKGMMRHLLGQTLTVYKVPELIFKRDTSVAYGSKIDKLINQVKKQDQERENKNK.

This sequence belongs to the RbfA family. As to quaternary structure, monomer. Binds 30S ribosomal subunits, but not 50S ribosomal subunits or 70S ribosomes.

The protein localises to the cytoplasm. In terms of biological role, one of several proteins that assist in the late maturation steps of the functional core of the 30S ribosomal subunit. Associates with free 30S ribosomal subunits (but not with 30S subunits that are part of 70S ribosomes or polysomes). Required for efficient processing of 16S rRNA. May interact with the 5'-terminal helix region of 16S rRNA. In Lactobacillus johnsonii (strain CNCM I-12250 / La1 / NCC 533), this protein is Ribosome-binding factor A.